A 142-amino-acid polypeptide reads, in one-letter code: Transcription antitermination protein NusB (142 aa).

It belongs to the NusB family.

Functionally, involved in transcription antitermination. Required for transcription of ribosomal RNA (rRNA) genes. Binds specifically to the boxA antiterminator sequence of the ribosomal RNA (rrn) operons. This chain is Transcription antitermination protein NusB, found in Streptomyces coelicolor (strain ATCC BAA-471 / A3(2) / M145).